A 542-amino-acid polypeptide reads, in one-letter code: Peptide chain release factor 3 (542 aa).

A tr-type G domain is found at Asp14–Gly283. Residues Ser23–Thr30, Asp91–His95, and Asn145–Asp148 each bind GTP.

This sequence belongs to the TRAFAC class translation factor GTPase superfamily. Classic translation factor GTPase family. PrfC subfamily.

It localises to the cytoplasm. Functionally, increases the formation of ribosomal termination complexes and stimulates activities of RF-1 and RF-2. It binds guanine nucleotides and has strong preference for UGA stop codons. It may interact directly with the ribosome. The stimulation of RF-1 and RF-2 is significantly reduced by GTP and GDP, but not by GMP. In Trichodesmium erythraeum (strain IMS101), this protein is Peptide chain release factor 3.